The primary structure comprises 273 residues: NADPH-dependent 7-cyano-7-deazaguanine reductase (273 aa).

81–83 (VES) provides a ligand contact to substrate. NADPH is bound at residue 83-84 (SK). Cys-179 serves as the catalytic Thioimide intermediate. Residue Asp-186 is the Proton donor of the active site. 218 to 219 (AE) is a substrate binding site. NADPH is bound at residue 247-248 (RG).

This sequence belongs to the GTP cyclohydrolase I family. QueF type 2 subfamily. In terms of assembly, homodimer.

The protein resides in the cytoplasm. It carries out the reaction 7-aminomethyl-7-carbaguanine + 2 NADP(+) = 7-cyano-7-deazaguanine + 2 NADPH + 3 H(+). It functions in the pathway tRNA modification; tRNA-queuosine biosynthesis. In terms of biological role, catalyzes the NADPH-dependent reduction of 7-cyano-7-deazaguanine (preQ0) to 7-aminomethyl-7-deazaguanine (preQ1). The chain is NADPH-dependent 7-cyano-7-deazaguanine reductase from Rickettsia prowazekii (strain Madrid E).